The following is a 226-amino-acid chain: Chalcone--flavanone isomerase 1 (226 aa).

T52, N117, and T194 together coordinate substrate.

The protein belongs to the chalcone isomerase family.

It catalyses the reaction a chalcone = a flavanone.. The protein operates within secondary metabolite biosynthesis; flavonoid biosynthesis. In terms of biological role, catalyzes the intramolecular cyclization of bicyclic chalcones into tricyclic (S)-flavanones. Responsible for the isomerization of 4,2',4',6'-tetrahydroxychalcone (also termed chalcone) into naringenin. The sequence is that of Chalcone--flavanone isomerase 1 (CHI1) from Lotus japonicus (Lotus corniculatus var. japonicus).